The following is a 521-amino-acid chain: Adenosylhomocysteinase-like 1 (521 aa).

A disordered region spans residues 1-92; that stretch reads MNNLADTVVV…EKVQKNSKGS (92 aa). The segment covering 54-73 has biased composition (low complexity); sequence RSLSASSTDSFSSASYTGSS. Substrate contacts are provided by D220 and E245. Residue 246–248 coordinates NAD(+); sequence SVT. Substrate is bound by residues K275 and D279. NAD(+)-binding positions include 311-316, E332, 388-390, N435, K515, 515-519, and Y519; these read GDVGKG, MGH, and KPNYY.

Belongs to the adenosylhomocysteinase family. As to quaternary structure, interacts with Ahcy; the interaction may negatively regulate Ahcy catalytic activity. NAD(+) is required as a cofactor.

In terms of biological role, might play a role in the regulation of methionine metabolism possibly by binding and inactivating Ahcy. In Drosophila melanogaster (Fruit fly), this protein is Adenosylhomocysteinase-like 1.